Consider the following 473-residue polypeptide: Photosystem II CP43 reaction center protein (473 aa).

A propeptide spanning residues Met1–Glu14 is cleaved from the precursor. The residue at position 15 (Thr15) is an N-acetylthreonine. Thr15 is subject to Phosphothreonine. A run of 5 helical transmembrane segments spans residues Leu69–Ala93, Leu134–Asn155, Lys178–Thr200, Lys255–Ser275, and Trp291–Ala312. Glu367 is a [CaMn4O5] cluster binding site. The chain crosses the membrane as a helical span at residues Arg447 to Pro471.

The protein belongs to the PsbB/PsbC family. PsbC subfamily. As to quaternary structure, PSII is composed of 1 copy each of membrane proteins PsbA, PsbB, PsbC, PsbD, PsbE, PsbF, PsbH, PsbI, PsbJ, PsbK, PsbL, PsbM, PsbT, PsbX, PsbY, PsbZ, Psb30/Ycf12, at least 3 peripheral proteins of the oxygen-evolving complex and a large number of cofactors. It forms dimeric complexes. It depends on Binds multiple chlorophylls and provides some of the ligands for the Ca-4Mn-5O cluster of the oxygen-evolving complex. It may also provide a ligand for a Cl- that is required for oxygen evolution. PSII binds additional chlorophylls, carotenoids and specific lipids. as a cofactor.

The protein localises to the plastid. The protein resides in the chloroplast thylakoid membrane. Its function is as follows. One of the components of the core complex of photosystem II (PSII). It binds chlorophyll and helps catalyze the primary light-induced photochemical processes of PSII. PSII is a light-driven water:plastoquinone oxidoreductase, using light energy to abstract electrons from H(2)O, generating O(2) and a proton gradient subsequently used for ATP formation. This chain is Photosystem II CP43 reaction center protein, found in Populus trichocarpa (Western balsam poplar).